A 182-amino-acid chain; its full sequence is Large ribosomal subunit protein uL15 (182 aa).

Residues 1 to 52 (MDLSSLRPAKGAVKNKKRIGRGPGSGNGTTAGKGNKGQQSRSGYTRPVSEGG) are disordered. Gly residues predominate over residues 21–35 (RGPGSGNGTTAGKGN).

It belongs to the universal ribosomal protein uL15 family. Part of the 50S ribosomal subunit.

In terms of biological role, binds to the 23S rRNA. This is Large ribosomal subunit protein uL15 from Chlorobium phaeobacteroides (strain BS1).